We begin with the raw amino-acid sequence, 171 residues long: Putative adenylate kinase (171 aa).

Gly9, Gly11, Lys12, Thr13, and Thr14 together coordinate ATP. Residues 28–51 (SLGELIRQKGFVLGRDPIRGYLEA) are NMP. Positions 99 to 109 (GRGYPEGKVLE) are LID. An ATP-binding site is contributed by Arg100.

This sequence belongs to the adenylate kinase family. AK6 subfamily. As to quaternary structure, interacts with uS11. Not a structural component of 40S pre-ribosomes, but transiently interacts with them by binding to uS11.

It carries out the reaction AMP + ATP = 2 ADP. It catalyses the reaction ATP + H2O = ADP + phosphate + H(+). In terms of biological role, broad-specificity nucleoside monophosphate (NMP) kinase that catalyzes the reversible transfer of the terminal phosphate group between nucleoside triphosphates and monophosphates. Also has ATPase activity. Involved in the late maturation steps of the 30S ribosomal particles, specifically 16S rRNA maturation. While NMP activity is not required for ribosome maturation, ATPase activity is. Associates transiently with small ribosomal subunit protein uS11. ATP hydrolysis breaks the interaction with uS11. May temporarily remove uS11 from the ribosome to enable a conformational change of the ribosomal RNA that is needed for the final maturation step of the small ribosomal subunit. The polypeptide is Putative adenylate kinase (Methanothermobacter thermautotrophicus (strain ATCC 29096 / DSM 1053 / JCM 10044 / NBRC 100330 / Delta H) (Methanobacterium thermoautotrophicum)).